The following is a 257-amino-acid chain: Enolase-phosphatase E1 (257 aa).

Residues aspartate 16 and glutamate 18 each coordinate Mg(2+). Substrate contacts are provided by residues 150–151 and lysine 184; that span reads SS. Aspartate 209 is a Mg(2+) binding site.

The protein belongs to the HAD-like hydrolase superfamily. MasA/MtnC family. In terms of assembly, monomer. Mg(2+) serves as cofactor.

The protein localises to the cytoplasm. Its subcellular location is the nucleus. The catalysed reaction is 5-methylsulfanyl-2,3-dioxopentyl phosphate + H2O = 1,2-dihydroxy-5-(methylsulfanyl)pent-1-en-3-one + phosphate. It participates in amino-acid biosynthesis; L-methionine biosynthesis via salvage pathway; L-methionine from S-methyl-5-thio-alpha-D-ribose 1-phosphate: step 3/6. Its pathway is amino-acid biosynthesis; L-methionine biosynthesis via salvage pathway; L-methionine from S-methyl-5-thio-alpha-D-ribose 1-phosphate: step 4/6. Functionally, bifunctional enzyme that catalyzes the enolization of 2,3-diketo-5-methylthiopentyl-1-phosphate (DK-MTP-1-P) into the intermediate 2-hydroxy-3-keto-5-methylthiopentenyl-1-phosphate (HK-MTPenyl-1-P), which is then dephosphorylated to form the acireductone 1,2-dihydroxy-3-keto-5-methylthiopentene (DHK-MTPene). The chain is Enolase-phosphatase E1 (Enoph1) from Mus musculus (Mouse).